We begin with the raw amino-acid sequence, 553 residues long: PE cleavage protein A (553 aa).

The PE domain occupies 1–92 (MSLLVVAPEW…SAGSYSAAEA (92 aa)). Asp293 is an active-site residue.

Belongs to the mycobacterial PE family. PGRS subfamily. Undergoes auto-proteolytic processing.

Its subcellular location is the secreted. It is found in the cell surface. Aspartic protease that processes the lipase LipY and other PE_PGRS proteins. Can also cleave itself. Cleaves LipY both inside the PE domain, before amino acid 98, and after amino acids 136 and 149. Involved in virulence. This chain is PE cleavage protein A, found in Mycobacterium marinum (strain ATCC BAA-535 / M).